Consider the following 826-residue polypeptide: Dolichyl-diphosphooligosaccharide--protein glycosyltransferase subunit STT3B (826 aa).

The segment at 1 to 60 is disordered; that stretch reads MAEPSAPESKHKSSLNSSPWSGLMALGNSRHGHHGPGAQCAHKAAGGAAPPKPAPAGLSG. Alanine 2 is subject to N-acetylalanine. Residues 2 to 41 lie on the Cytoplasmic side of the membrane; that stretch reads AEPSAPESKHKSSLNSSPWSGLMALGNSRHGHHGPGAQCA. Serine 13, serine 18, and serine 29 each carry phosphoserine. Residues 37–49 show a composition bias toward low complexity; it reads GAQCAHKAAGGAA. The helical transmembrane segment at 42–86 threads the bilayer; the sequence is HKAAGGAAPPKPAPAGLSGGLSQPAGWQSLLSFTILFLAWLAGFS. At 87-173 the chain is on the lumenal side; that stretch reads SRLFAVIRFE…VHIRDVCVFL (87 aa). The short motif at 101–103 is the DXD motif 1 element; it reads EFD. Aspartate 103 contacts Mn(2+). Residues 174–192 traverse the membrane as a helical segment; the sequence is APTFSGLTSISTFLLTREL. Residues 193-194 are Cytoplasmic-facing; it reads WN. A helical membrane pass occupies residues 195 to 212; sequence QGAGLLAACFIAIVPGYI. The Lumenal segment spans residues 213 to 223; it reads SRSVAGSFDNE. Mn(2+) is bound by residues aspartate 221 and glutamate 223. The DXD motif 2 signature appears at 221-223; it reads DNE. A helical membrane pass occupies residues 224 to 243; that stretch reads GIAIFALQFTYYLWVKSVKT. Residues 244-245 lie on the Cytoplasmic side of the membrane; sequence GS. The helical transmembrane segment at 246–260 threads the bilayer; the sequence is VFWTMCCCLSYFYMV. The Lumenal portion of the chain corresponds to 261–265; that stretch reads SAWGG. Residues 266–282 traverse the membrane as a helical segment; it reads YVFIINLIPLHVFVLLL. Residues 283–287 are Cytoplasmic-facing; that stretch reads MQRYS. The chain crosses the membrane as a helical span at residues 288-313; that stretch reads KRVYIAYSTFYIVGLILSMQIPFVGF. Topologically, residues 314-321 are lumenal; the sequence is QPIRTSEH. Residues 322-341 form a helical membrane-spanning segment; it reads MAAAGVFALLQAYAFLQYLR. The Cytoplasmic portion of the chain corresponds to 342–350; sequence DRLTKQEFQ. Residues 351-371 form a helical membrane-spanning segment; it reads TLFFLGVSLAAGAVFLSVIYL. At 372-410 the chain is on the lumenal side; sequence TYTGYIAPWSGRFYSLWDTGYAKIHIPIIASVSEHQPTT. Residues 402 to 405 carry the SVSE motif motif; that stretch reads SVSE. Residues 411 to 433 form a helical membrane-spanning segment; the sequence is WVSFFFDLHILVCTFPAGLWFCI. The Cytoplasmic portion of the chain corresponds to 434-439; it reads KNINDE. Residues 440–456 traverse the membrane as a helical segment; that stretch reads RVFVALYAISAVYFAGV. Over 457–460 the chain is Lumenal; sequence MVRL. Arginine 459 is a binding site for dolichyl diphosphooligosaccharide. The helical transmembrane segment at 461-482 threads the bilayer; the sequence is MLTLTPVVCMLSAIAFSNVFEH. Over 483-526 the chain is Cytoplasmic; the sequence is YLGDDMKRENPPVEDSSDEDDKRNQGNLYDKAGKVRKHATEQEK. Residues 490–509 are disordered; sequence RENPPVEDSSDEDDKRNQGN. A phosphoserine mark is found at serine 498 and serine 499. Residues 527–552 traverse the membrane as a helical segment; the sequence is TEEGLGPNIKSIVTMLMLMLLMMFAV. At 553-826 the chain is on the lumenal side; that stretch reads HCTWVTSNAY…KGKKISKKTV (274 aa). The segment at 604–606 is interacts with target acceptor peptide in protein substrate; sequence WWD. Residues 604–608 carry the WWDYG motif motif; sequence WWDYG. Dolichyl diphosphooligosaccharide is bound at residue tyrosine 609. N-linked (GlcNAc...) asparagine glycosylation is found at asparagine 616 and asparagine 623. N-linked (GlcNAc...) (high mannose) asparagine glycosylation is present at asparagine 627. N-linked (GlcNAc...) asparagine glycosylation is present at asparagine 641. The DK motif signature appears at 671 to 678; the sequence is DINKFLWM.

The protein belongs to the STT3 family. In terms of assembly, component of the oligosaccharyltransferase (OST) complex. There are 2 OST complexes, OST-A and OST-B, which contain STT3A or STT3B as catalytic subunit, respectively. OST-A and OST-B contain common core subunits RPN1, RPN2, OST48, OST4, DAD1 and TMEM258, and OST-B contains either MAGT1 or TUSC3 as specific accessory subunit. Mg(2+) is required as a cofactor. It depends on Mn(2+) as a cofactor. As to expression, expressed in heart, brain, placenta, lung, liver, muscle, kidney and pancreas. Expressed in skin fibroblasts (at protein level).

The protein localises to the endoplasmic reticulum. Its subcellular location is the endoplasmic reticulum membrane. The enzyme catalyses a di-trans,poly-cis-dolichyl diphosphooligosaccharide + L-asparaginyl-[protein] = N(4)-(oligosaccharide-(1-&gt;4)-N-acetyl-beta-D-glucosaminyl-(1-&gt;4)-N-acetyl-beta-D-glucosaminyl)-L-asparaginyl-[protein] + a di-trans,poly-cis-dolichyl diphosphate + H(+). The protein operates within protein modification; protein glycosylation. Its function is as follows. Catalytic subunit of the oligosaccharyl transferase (OST) complex that catalyzes the initial transfer of a defined glycan (Glc(3)Man(9)GlcNAc(2) in eukaryotes) from the lipid carrier dolichol-pyrophosphate to an asparagine residue within an Asn-X-Ser/Thr consensus motif in nascent polypeptide chains, the first step in protein N-glycosylation. N-glycosylation occurs cotranslationally and the complex associates with the Sec61 complex at the channel-forming translocon complex that mediates protein translocation across the endoplasmic reticulum (ER). All subunits are required for a maximal enzyme activity. This subunit contains the active site and the acceptor peptide and donor lipid-linked oligosaccharide (LLO) binding pockets. STT3B is present in a small subset of OST complexes (OST-B) and mediates both cotranslational and post-translational N-glycosylation of target proteins: STT3B-containing complexes are required for efficient post-translational glycosylation and while they are less competent than STT3A-containing complexes for cotranslational glycosylation, they have the ability to mediate glycosylation of some nascent sites that are not accessible for STT3A. STT3B-containing complexes also act post-translationally and mediate modification of skipped glycosylation sites in unfolded proteins. Plays a role in ER-associated degradation (ERAD) pathway that mediates ubiquitin-dependent degradation of misfolded endoplasmic reticulum proteins by mediating N-glycosylation of unfolded proteins, which are then recognized by the ERAD pathway and targeted for degradation. Mediates glycosylation of the disease variant AMYL-TTR 'Asp-38' of TTR at 'Asn-118', leading to its degradation. The sequence is that of Dolichyl-diphosphooligosaccharide--protein glycosyltransferase subunit STT3B from Homo sapiens (Human).